Reading from the N-terminus, the 173-residue chain is MVLLAAKGLSLLDVNPGLVVWTLVTFLVVVLVLKKFAWDVILKALDERAETVQNDIKKASELRLEAEALLKDYEARLNSAKDEANAIVAEAKSDALKLKNKLLEETNGEVKAQKDQAVKEIELAKAKALGQLQAQIVEMTITVAAKVLEKQLKSEDYKAFIETELDKLGKLSA.

A helical membrane pass occupies residues 12 to 32; it reads LDVNPGLVVWTLVTFLVVVLV.

Belongs to the ATPase B chain family. In terms of assembly, F-type ATPases have 2 components, F(1) - the catalytic core - and F(0) - the membrane proton channel. F(1) has five subunits: alpha(3), beta(3), gamma(1), delta(1), epsilon(1). F(0) has three main subunits: a(1), b(2) and c(10-14). The alpha and beta chains form an alternating ring which encloses part of the gamma chain. F(1) is attached to F(0) by a central stalk formed by the gamma and epsilon chains, while a peripheral stalk is formed by the delta and b chains.

The protein localises to the cell inner membrane. Its function is as follows. F(1)F(0) ATP synthase produces ATP from ADP in the presence of a proton or sodium gradient. F-type ATPases consist of two structural domains, F(1) containing the extramembraneous catalytic core and F(0) containing the membrane proton channel, linked together by a central stalk and a peripheral stalk. During catalysis, ATP synthesis in the catalytic domain of F(1) is coupled via a rotary mechanism of the central stalk subunits to proton translocation. In terms of biological role, component of the F(0) channel, it forms part of the peripheral stalk, linking F(1) to F(0). The chain is ATP synthase subunit b from Leptospira interrogans serogroup Icterohaemorrhagiae serovar copenhageni (strain Fiocruz L1-130).